A 249-amino-acid chain; its full sequence is DNA polymerase sliding clamp (249 aa).

The protein belongs to the PCNA family. As to quaternary structure, homotrimer. The subunits circularize to form a toroid; DNA passes through its center. Replication factor C (RFC) is required to load the toroid on the DNA.

Functionally, sliding clamp subunit that acts as a moving platform for DNA processing. Responsible for tethering the catalytic subunit of DNA polymerase and other proteins to DNA during high-speed replication. The chain is DNA polymerase sliding clamp from Nanoarchaeum equitans (strain Kin4-M).